The following is a 599-amino-acid chain: Adenine deaminase (599 aa).

The protein belongs to the metallo-dependent hydrolases superfamily. Adenine deaminase family. The cofactor is Mn(2+).

It catalyses the reaction adenine + H2O + H(+) = hypoxanthine + NH4(+). The chain is Adenine deaminase from Clostridium botulinum (strain Langeland / NCTC 10281 / Type F).